The following is a 342-amino-acid chain: Ribosomal RNA small subunit methyltransferase C (342 aa).

The protein belongs to the methyltransferase superfamily. RsmC family. Monomer.

Its subcellular location is the cytoplasm. The enzyme catalyses guanosine(1207) in 16S rRNA + S-adenosyl-L-methionine = N(2)-methylguanosine(1207) in 16S rRNA + S-adenosyl-L-homocysteine + H(+). Functionally, specifically methylates the guanine in position 1207 of 16S rRNA in the 30S particle. The protein is Ribosomal RNA small subunit methyltransferase C of Shewanella loihica (strain ATCC BAA-1088 / PV-4).